The primary structure comprises 812 residues: Axin-2 (812 aa).

Residues 1 to 43 (MNRTLTDPMVSSFREDDPRPPVPGEEGETTCHHPSKLAMMRPK) form a disordered region. An RGS domain is found at 84 to 203 (SLHFLLGDQD…LTSDIYLEYV (120 aa)). Disordered regions lie at residues 275–326 (SYRR…AIPP), 388–430 (ETMS…TCEE), 446–484 (TPGC…SSMN), and 609–726 (RQTK…SGCH). Polar residues predominate over residues 285-303 (NRFTSGYSFAPATSANDSE). The segment covering 305–323 (SSDALTDDSMSMTDSSVDA) has biased composition (low complexity). The interval 329–415 (LGSKKQLQRE…RDESEMSSSS (87 aa)) is interaction with GSK3B. Over residues 388–397 (ETMSSLEERL) the composition is skewed to basic and acidic residues. Over residues 401–410 (QEEEERDESE) the composition is skewed to acidic residues. Over residues 411-421 (MSSSSASHSLP) the composition is skewed to low complexity. The segment at 415-467 (SASHSLPLLPPGTCEEDPQAILDEHLSRVLKTPGCQSPGLLRHSPRSRSPEQR) is interaction with beta-catenin. The span at 475–484 (STRSQSSSMN) shows a compositional bias: polar residues. A compositionally biased stretch (basic and acidic residues) spans 672-683 (EEARRRLEEVSK). Positions 730–812 (GSETVVTYFF…KILGKVDRMD (83 aa)) constitute a DIX domain.

In terms of assembly, interacts with hwa; leading to promote the tankyrase-mediated degradation of axin1. ADP-ribosylated by tankyrase tnks and tnks2. Poly-ADP-ribosylated protein is recognized by rnf146, followed by ubiquitination and subsequent activation of the Wnt signaling pathway. Post-translationally, ubiquitinated by rnf146 when poly-ADP-ribosylated, leading to its degradation and subsequent activation of the Wnt signaling pathway.

It is found in the cytoplasm. In terms of biological role, component of the beta-catenin destruction complex required for regulating ctnnb1 levels through phosphorylation and ubiquitination, and modulating Wnt-signaling. Controls dorsoventral patterning by down-regulating ctnnb1 to inhibit the Wnt signaling pathway and ventralize embryos. The chain is Axin-2 (axin2) from Danio rerio (Zebrafish).